Here is a 440-residue protein sequence, read N- to C-terminus: Thymidine phosphorylase (440 aa).

It belongs to the thymidine/pyrimidine-nucleoside phosphorylase family. As to quaternary structure, homodimer.

It carries out the reaction thymidine + phosphate = 2-deoxy-alpha-D-ribose 1-phosphate + thymine. It participates in pyrimidine metabolism; dTMP biosynthesis via salvage pathway; dTMP from thymine: step 1/2. The enzymes which catalyze the reversible phosphorolysis of pyrimidine nucleosides are involved in the degradation of these compounds and in their utilization as carbon and energy sources, or in the rescue of pyrimidine bases for nucleotide synthesis. The chain is Thymidine phosphorylase from Serratia proteamaculans (strain 568).